We begin with the raw amino-acid sequence, 508 residues long: tRNA-2-methylthio-N(6)-dimethylallyladenosine synthase (508 aa).

A disordered region spans residues 1 to 21 (MNEEQRKASGQVSSSDKKSEK). The MTTase N-terminal domain occupies 65–183 (RKFYIRTYGC…LPELLSECYL (119 aa)). Residues Cys74, Cys110, Cys144, Cys220, Cys224, and Cys227 each coordinate [4Fe-4S] cluster. Residues 206–436 (RQGKIKGWVN…NALVNEISAK (231 aa)) enclose the Radical SAM core domain. In terms of domain architecture, TRAM spans 439-502 (KEYEGQTVEV…TWSLDGEMVG (64 aa)).

Belongs to the methylthiotransferase family. MiaB subfamily. In terms of assembly, monomer. The cofactor is [4Fe-4S] cluster.

The protein resides in the cytoplasm. The catalysed reaction is N(6)-dimethylallyladenosine(37) in tRNA + (sulfur carrier)-SH + AH2 + 2 S-adenosyl-L-methionine = 2-methylsulfanyl-N(6)-dimethylallyladenosine(37) in tRNA + (sulfur carrier)-H + 5'-deoxyadenosine + L-methionine + A + S-adenosyl-L-homocysteine + 2 H(+). Functionally, catalyzes the methylthiolation of N6-(dimethylallyl)adenosine (i(6)A), leading to the formation of 2-methylthio-N6-(dimethylallyl)adenosine (ms(2)i(6)A) at position 37 in tRNAs that read codons beginning with uridine. This is tRNA-2-methylthio-N(6)-dimethylallyladenosine synthase from Bacillus pumilus (strain SAFR-032).